The sequence spans 746 residues: NAD(P)H-quinone oxidoreductase subunit 5, chloroplastic (746 aa).

The next 16 membrane-spanning stretches (helical) occupy residues 9-29 (WIIP…LLLF), 40-60 (WTFL…YLSI), 89-109 (IDPL…LVLI), 125-145 (FAYM…SNLI), 147-167 (VYFF…FWFT), 185-205 (GDFG…SFEF), 221-241 (VNLL…IAKS), 258-278 (TPIS…FLVA), 280-300 (LLPL…IGII), 327-347 (LGYM…FHLI), 354-374 (ALLF…VGYS), 396-416 (TAFL…CFWS), 425-445 (LLFS…TAFY), 547-567 (ILFP…IGIP), 608-628 (FSVS…KPFY), and 723-743 (YLFL…FFYF).

It belongs to the complex I subunit 5 family. As to quaternary structure, NDH is composed of at least 16 different subunits, 5 of which are encoded in the nucleus.

The protein resides in the plastid. Its subcellular location is the chloroplast thylakoid membrane. It catalyses the reaction a plastoquinone + NADH + (n+1) H(+)(in) = a plastoquinol + NAD(+) + n H(+)(out). The catalysed reaction is a plastoquinone + NADPH + (n+1) H(+)(in) = a plastoquinol + NADP(+) + n H(+)(out). Functionally, NDH shuttles electrons from NAD(P)H:plastoquinone, via FMN and iron-sulfur (Fe-S) centers, to quinones in the photosynthetic chain and possibly in a chloroplast respiratory chain. The immediate electron acceptor for the enzyme in this species is believed to be plastoquinone. Couples the redox reaction to proton translocation, and thus conserves the redox energy in a proton gradient. This Olimarabidopsis pumila (Dwarf rocket) protein is NAD(P)H-quinone oxidoreductase subunit 5, chloroplastic (ndhF).